Here is a 441-residue protein sequence, read N- to C-terminus: MSNVTHQPKIGFVSLGCPKNLVDSERILTELRTEGYDVVPRYDDADMVIVNTCGFIDSAVQESLEAIGEALNENGKVIVTGCLGAKEDQIREVHPKVLEITGPHSYEQVLQHVHHYVPKPKHNPFLSLVPEQGVKLTPRHYAYLKISEGCNHRCTFCIIPSMRGDLVSRPIGDVLSEAKRLVDAGVKEILVISQDTSAYGVDVKHRTGFHNGEPVKTSMASLCEQLSKLGVWTRLHYVYPYPHVDDVIPLMAEGKILPYLDIPLQHASPRILKLMKRPGSVDRQLARIKQWRDICPELTLRSTFIVGFPGETEEDFQMLLDFLKEARLDRVGCFKYSPVEGAGANELPDQVPEEVKEERWNRFMQLQQQISAERLQEKVGREILVIVDEVDEEGAIGRSMADAPEIDGAVYLNGETNVKPGDIVRVKVENADEYDLWGSRV.

Residues Pro-8–Pro-118 form the MTTase N-terminal domain. [4Fe-4S] cluster-binding residues include Cys-17, Cys-53, Cys-82, Cys-150, Cys-154, and Cys-157. A Radical SAM core domain is found at Leu-136 to Glu-373. The 66-residue stretch at Gln-376 to Val-441 folds into the TRAM domain.

The protein belongs to the methylthiotransferase family. RimO subfamily. Requires [4Fe-4S] cluster as cofactor.

It is found in the cytoplasm. The catalysed reaction is L-aspartate(89)-[ribosomal protein uS12]-hydrogen + (sulfur carrier)-SH + AH2 + 2 S-adenosyl-L-methionine = 3-methylsulfanyl-L-aspartate(89)-[ribosomal protein uS12]-hydrogen + (sulfur carrier)-H + 5'-deoxyadenosine + L-methionine + A + S-adenosyl-L-homocysteine + 2 H(+). Catalyzes the methylthiolation of an aspartic acid residue of ribosomal protein uS12. In Salmonella arizonae (strain ATCC BAA-731 / CDC346-86 / RSK2980), this protein is Ribosomal protein uS12 methylthiotransferase RimO.